The following is a 67-amino-acid chain: Penaeidin-4a (67 aa).

The first 19 residues, 1-19, serve as a signal peptide directing secretion; the sequence is MRLVVCLVFLASFALVCQG. Cystine bridges form between cysteine 42-cysteine 56, cysteine 45-cysteine 63, and cysteine 57-cysteine 64. Residue arginine 66 is modified to Arginine amide.

It belongs to the penaeidin family.

It localises to the cytoplasmic granule. Antibacterial and antifungal activity. Presents chitin-binding activity. The sequence is that of Penaeidin-4a from Penaeus vannamei (Whiteleg shrimp).